A 55-amino-acid chain; its full sequence is Conotoxin Cal22b (55 aa).

Positions 1 to 5 are excised as a propeptide; it reads GRPSA.

Contains 4 disulfide bonds. As to expression, expressed by the venom duct.

The protein resides in the secreted. Its function is as follows. Probable neurotoxin with unknown target. Possibly targets ion channels. The sequence is that of Conotoxin Cal22b from Californiconus californicus (California cone).